We begin with the raw amino-acid sequence, 790 residues long: Probable copper-transporting ATPase SynA (790 aa).

The Cytoplasmic segment spans residues 1–105 (MPAAIVHSAD…IPPLQQQRLQ (105 aa)). The 68-residue stretch at 14–81 (TSILVEVEGM…EITGLGFRAQ (68 aa)) folds into the HMA domain. The Cu cation site is built by cysteine 25 and cysteine 28. A helical membrane pass occupies residues 106 to 125 (LAIAAFLLIVSSWGHLGHWL). Residues 126 to 134 (DHPLPGTDQ) are Extracellular-facing. A helical membrane pass occupies residues 135-154 (LWFHALLAIWALLGPGRSIL). The Cytoplasmic segment spans residues 155-166 (QAGWQGLRCGAP). Residues 167–189 (NMNSLVLLGTGSAYLASLVALLW) form a helical membrane-spanning segment. Over 190-193 (PQLG) the chain is Extracellular. A helical transmembrane segment spans residues 194 to 211 (WVCFLDEPVMLLGFILLG). Residues 212 to 357 (RTLEEQARFR…RKAPVQRFAD (146 aa)) are Cytoplasmic-facing. A helical membrane pass occupies residues 358–380 (AIAGRFVYGVCAIAALTFGFWAT). At 381–416 (LGSRWWPQVLQQPLPGLLIHAPHHGMEMAHPHSHSP) the chain is on the extracellular side. Residues 417–439 (LLLALTLAISVLVVACPCALGLA) form a helical membrane-spanning segment. Residues 440 to 726 (TPTAILVATG…QMGLRTIRQN (287 aa)) are Cytoplasmic-facing. Aspartate 476 (4-aspartylphosphate intermediate) is an active-site residue. Aspartate 669 and aspartate 673 together coordinate Mg(2+). A helical membrane pass occupies residues 727–749 (LTWALGYNVVMLPLAAGAFLPAY). The Extracellular portion of the chain corresponds to 750–753 (GLAL). The helical transmembrane segment at 754 to 776 (TPAIAGACMAVSSLAVVSNSLLL) threads the bilayer. At 777–790 (RYWFRRSLNHSVSV) the chain is on the cytoplasmic side.

The protein belongs to the cation transport ATPase (P-type) (TC 3.A.3) family. Type IB subfamily.

The protein localises to the cell membrane. It carries out the reaction Cu(2+)(in) + ATP + H2O = Cu(2+)(out) + ADP + phosphate + H(+). Its function is as follows. Involved in copper transport. This chain is Probable copper-transporting ATPase SynA (synA), found in Synechococcus sp. (strain ATCC 27144 / PCC 6301 / SAUG 1402/1) (Anacystis nidulans).